Consider the following 33-residue polypeptide: Tail virion protein G7P (33 aa).

The helical transmembrane segment at Ile10–Gly30 threads the bilayer.

Belongs to the inovirus G7P protein family.

It localises to the virion. It is found in the host membrane. Functionally, may initiate with G9P the virion concomitant assembly-budding process, by interacting with the packaging signal of the viral genome. The assembly-budding takes place at the host inner membrane. In turn, G7P and G9P are present at the end of the filamentous virion that emerges first from the bacterial host. This Escherichia coli (Bacteriophage f1) protein is Tail virion protein G7P (VII).